Reading from the N-terminus, the 223-residue chain is Rab-like protein 2A (223 aa).

GTP-binding positions include 28 to 35, 76 to 80, and 133 to 136; these read GDSAVGKS, DTAGQ, and NKID. The tract at residues 200–223 is disordered; it reads KLEQKEEDTSGQEQSDTTKSPSPS. A compositionally biased stretch (polar residues) spans 210 to 223; sequence GQEQSDTTKSPSPS.

This sequence belongs to the small GTPase superfamily. Rab family. Interacts with IFT27, IFT81, IFT172, ATP6V1E1, HK1, LDHC, MAPRE1 and HSPA2. As to expression, isoform 2 is expressed in the testis and localizes to the mid-piece of the sperm tail (at protein level). Isoform 2 is expressed at higher levels in testis than isoform 1. Isoform 1 and isoform 2 are widely expressed and notably within other tissues containing motile cilia including the lung, trachea, brain, ovary and kidney.

Plays an essential role in male fertility, sperm intra-flagellar transport, and tail assembly. Binds, in a GTP-regulated manner, to a specific set of effector proteins including key proteins involved in cilia development and function and delivers them into the growing sperm tail. The protein is Rab-like protein 2A (Rabl2) of Mus musculus (Mouse).